A 273-amino-acid polypeptide reads, in one-letter code: Outer surface protein A (273 aa).

The signal sequence occupies residues M1–A16. The N-palmitoyl cysteine moiety is linked to residue C17. The S-diacylglycerol cysteine moiety is linked to residue C17.

Belongs to the OspA lipoprotein family.

The protein localises to the cell outer membrane. It is found in the cell surface. Induces host (human and mouse) cytokine release by monocyte cell lines via TLR2 and CD14; nonlipidated protein does not stimulate host cells. This chain is Outer surface protein A, found in Borreliella burgdorferi (strain ATCC 35210 / DSM 4680 / CIP 102532 / B31) (Borrelia burgdorferi).